The following is a 414-amino-acid chain: uncharacterized protein (414 aa).

This is an uncharacterized protein from Rickettsia conorii (strain ATCC VR-613 / Malish 7).